The primary structure comprises 422 residues: Putative FBD-associated F-box protein At1g55030 (422 aa).

Residues 8–60 (TDMISQLPEPLILQILGSLPTKVAITTSVLSKQWQSHWKMMPKLEFDSFLRRL) enclose the F-box domain. LRR repeat units follow at residues 132 to 153 (TLET…VYLK), 154 to 175 (SLKT…INLL), and 180 to 201 (NLQD…TIAV). Residues 342-391 (EWNQPKNVPECLHHLEKFIWEGYKWKREEIEVAKYILKNTNRLKRAIFSL) enclose the FBD domain.

The protein is Putative FBD-associated F-box protein At1g55030 of Arabidopsis thaliana (Mouse-ear cress).